Consider the following 779-residue polypeptide: Angiomotin-like protein 2 (779 aa).

2 disordered regions span residues Gly-41–His-215 and Gln-263–Ser-308. Basic and acidic residues-rich tracts occupy residues Lys-100 to Ala-112 and Arg-141 to His-152. Positions Gly-101 to Gly-307 are required for interaction with CDH5. Tyr-107 is subject to Phosphotyrosine; by FGFR1. The span at Glu-160–Arg-169 shows a compositional bias: low complexity. Over residues His-177–Gly-193 the composition is skewed to polar residues. Residues Leu-196–Tyr-213 show a composition bias toward pro residues. Residues His-220–Gly-307 form a required for interaction with CDH1 region. The span at Ser-298 to Ser-308 shows a compositional bias: low complexity. Residues Ser-308 to Gln-581 adopt a coiled-coil conformation. Glycyl lysine isopeptide (Lys-Gly) (interchain with G-Cter in ubiquitin) cross-links involve residues Lys-347 and Lys-408. Disordered stretches follow at residues Arg-522–Leu-543 and Thr-679–Ser-753. A compositionally biased stretch (gly residues) spans Ala-530 to Gly-539. Polar residues-rich tracts occupy residues Gln-680–Arg-690 and Asp-725–Cys-740. Ser-759 and Ser-762 each carry phosphoserine. A PDZ-binding motif is present at residues Glu-776–Ile-779.

It belongs to the angiomotin family. In terms of assembly, part of a complex composed of AMOTL2, MAGI1 and CDH5, within the complex AMOTL2 acts as a scaffold protein for the interaction of MAGI1 with CDH5. The complex is required for coupling actin fibers to cell junctions in endothelial cells. Within the complex AMOTL2 (via its N-terminus) interacts with CDH5. Interacts (via N-terminus) with MAGI1. Interacts (via N-terminus) with ACTB; the interaction facilitates binding of cell junction complexes to actin fibers in endothelial cells. Interacts with CDH1; the interaction may facilitate binding of radial actin fibers to cell junction complexes. Interacts with SRC. Interacts with YAP1; the interaction is required for ubiquitination of AMOTL2 and localization of YAP1 to tight junctions. Interacts with WWP1; the interaction facilitates WWP1 interaction with the Crumbs complex and subsequent WWP1 translocation to the plasma membrane. WWP1 interaction with the Crumbs complex promotes WWP1 monoubiquitination of AMOTL2 which subsequently activates the Hippo signaling pathway. When ubiquitinated interacts with LATS2 (via UBA domain); the interaction promotes LATS2 phosphorylation of YAP1. Interacts (via PPXY motif) with WWTR1/TAZ (via WW domain); the interaction promotes WWTR1/TAZ localization to the cytoplasm and thereby inhibition of its transcriptional properties. Interacts with PHLDB2; interaction may facilitate PHLDB2 localization to the myotube podosome cortex that surrounds the core. Post-translationally, monoubiquitinated at Lys-347 and Lys-408 by Crumbs complex-bound WWP1. De-ubiquitinated at Lys-347 and Lys-408 by USP9X; the interaction may be promoted by cell contact inhibition. Deubiquitination of AMOTL2 negatively regulates Hippo signaling activation. In terms of processing, phosphorylation at Tyr-107 is necessary for efficient binding to SRC and synergistically functioning with SRC to activate the downstream MAPK pathway.

The protein localises to the recycling endosome. Its subcellular location is the cytoplasm. The protein resides in the cell projection. It is found in the podosome. It localises to the cell junction. Regulates the translocation of phosphorylated SRC to peripheral cell-matrix adhesion sites. Required for proper architecture of actin filaments. Plays a role in coupling actin fibers to cell junctions in endothelial cells and is therefore required for correct endothelial cell morphology via facilitating transcellular transmission of mechanical force resulting in endothelial cell elongation. Required for the anchoring of radial actin fibers to CDH1 junction complexes at the cell membrane which facilitates organization of radial actin fiber structure and cellular response to contractile forces. This contributes to maintenance of cell area, size, shape, epithelial sheet organization and trophectoderm cell properties that facilitate blastocyst zona hatching. Inhibits the Wnt/beta-catenin signaling pathway, probably by recruiting CTNNB1 to recycling endosomes and hence preventing its translocation to the nucleus. Participates in angiogenesis. Activates the Hippo signaling pathway in response to cell contact inhibition via interaction with and ubiquitination by Crumbs complex-bound WWP1. Ubiquitinated AMOTL2 then interacts with LATS2 which in turn phosphorylates YAP1, excluding it from the nucleus and localizing it to the cytoplasm and tight junctions, therefore ultimately repressing YAP1-driven transcription of target genes. Acts to inhibit WWTR1/TAZ transcriptional coactivator activity via sequestering WWTR1/TAZ in the cytoplasm and at tight junctions. Regulates the size and protein composition of the podosome cortex and core at myofibril neuromuscular junctions. Selectively promotes FGF-induced MAPK activation through SRC. May play a role in the polarity, proliferation and migration of endothelial cells. The protein is Angiomotin-like protein 2 of Homo sapiens (Human).